Reading from the N-terminus, the 322-residue chain is Transcriptional activator protein Pur-alpha (322 aa).

The tract at residues Met1–Gln55 is disordered. Ala2 bears the N-acetylalanine mark. Gly residues predominate over residues Glu9–Gly52. The PUR repeat I repeat unit spans residues Glu60–Gly125. The stretch at Ala142 to Glu213 is one PUR repeat II repeat. Ser182 bears the Phosphoserine mark. The stretch at Pro215–Ile281 is one PUR repeat III repeat. The segment covering Leu295–Gln314 has biased composition (low complexity). The segment at Leu295–Asp322 is disordered.

It belongs to the PUR DNA-binding protein family. In terms of assembly, homodimer, heterodimer with PURB and heterotrimer with PURB and YBX1/Y-box protein 1. Interacts with FMR1; this interaction occurs in association with polyribosome.

The protein resides in the nucleus. In terms of biological role, this is a probable transcription activator that specifically binds the purine-rich single strand of the PUR element located upstream of the MYC gene. May play a role in the initiation of DNA replication and in recombination. The polypeptide is Transcriptional activator protein Pur-alpha (PURA) (Homo sapiens (Human)).